The chain runs to 196 residues: GTP cyclohydrolase 1 (196 aa).

Zn(2+)-binding residues include Cys84, His87, and Cys157.

This sequence belongs to the GTP cyclohydrolase I family. In terms of assembly, toroid-shaped homodecamer, composed of two pentamers of five dimers.

It catalyses the reaction GTP + H2O = 7,8-dihydroneopterin 3'-triphosphate + formate + H(+). It participates in cofactor biosynthesis; 7,8-dihydroneopterin triphosphate biosynthesis; 7,8-dihydroneopterin triphosphate from GTP: step 1/1. The sequence is that of GTP cyclohydrolase 1 from Corynebacterium glutamicum (strain R).